We begin with the raw amino-acid sequence, 263 residues long: Uridylate kinase (263 aa).

29–32 (KVSG) is a binding site for ATP. UMP is bound at residue glycine 71. ATP contacts are provided by glycine 72 and arginine 76. Residues aspartate 91 and 152–159 (TGNPFFTT) each bind UMP. ATP is bound by residues threonine 179, glutamine 180, tyrosine 185, and aspartate 188.

This sequence belongs to the UMP kinase family. Homohexamer.

The protein localises to the cytoplasm. It catalyses the reaction UMP + ATP = UDP + ADP. It participates in pyrimidine metabolism; CTP biosynthesis via de novo pathway; UDP from UMP (UMPK route): step 1/1. Inhibited by UTP. Its function is as follows. Catalyzes the reversible phosphorylation of UMP to UDP. The protein is Uridylate kinase of Maricaulis maris (strain MCS10) (Caulobacter maris).